We begin with the raw amino-acid sequence, 500 residues long: ATP synthase subunit alpha (500 aa).

169-176 (GDRQTGKT) serves as a coordination point for ATP.

The protein belongs to the ATPase alpha/beta chains family. In terms of assembly, F-type ATPases have 2 components, CF(1) - the catalytic core - and CF(0) - the membrane proton channel. CF(1) has five subunits: alpha(3), beta(3), gamma(1), delta(1), epsilon(1). CF(0) has three main subunits: a(1), b(2) and c(9-12). The alpha and beta chains form an alternating ring which encloses part of the gamma chain. CF(1) is attached to CF(0) by a central stalk formed by the gamma and epsilon chains, while a peripheral stalk is formed by the delta and b chains.

It is found in the cell membrane. It carries out the reaction ATP + H2O + 4 H(+)(in) = ADP + phosphate + 5 H(+)(out). In terms of biological role, produces ATP from ADP in the presence of a proton gradient across the membrane. The alpha chain is a regulatory subunit. This is ATP synthase subunit alpha from Lactococcus lactis subsp. lactis (strain IL1403) (Streptococcus lactis).